A 259-amino-acid polypeptide reads, in one-letter code: Probable ABC transporter permease protein RF_0080 (259 aa).

5 consecutive transmembrane segments (helical) span residues 13–35, 49–69, 148–168, 195–215, and 237–257; these read TIKF…SSII, LFIG…SGAV, VIAA…IGVM, PIDV…ISII, and AVVN…ELFF.

This sequence belongs to the MlaE permease family.

It is found in the cell inner membrane. Functionally, could be part of an ABC transporter complex. This Rickettsia felis (strain ATCC VR-1525 / URRWXCal2) (Rickettsia azadi) protein is Probable ABC transporter permease protein RF_0080.